We begin with the raw amino-acid sequence, 739 residues long: MQTLFLSLLAAAVTVHAYGSGGSNWDQAYSRAKDALQKLNQTEKVGLVTGVKWMGGPCVGNTYKPESIDYPSLCLQDSPLGIRFANPVTAFPAGINAGATWDTQLLYARGAAMGAEAKGLGIHVQLGPVAGPLGKNPNGGRNWEGFSVDPYLSGVAMEKTIRGMQDSGVQACAKHWLGNEQEHYRDTISSNIGDRAAHELYVWPFMDAVKAGVASVMCSYNKVNGTWACESDALNNKLMKEELGFPGYIMSDWNAQHSTVNSAVSGLDMTMPGSDFSNPPGSIFWGSNLEAAVADGSVPQSRLDDMVTRILAAWYLVGQDQGYPPVAFSSWNGGKANVDVTADHGTVARAVARDSIVLLKNGHGTLPLRKPKSLAIVGSDAIVNPAGPNACSDRGCNNGTLAMGWGSGTAEFPYLVGPLDAIQKRAAADGTKIVPSATDDPTAGASAAAAAETAIVFINSDSGEGYITVEGNLGDRNNLDPWHNGNELVKAVAAASKNVIVVIHSVGPIILETILAQPSVKAIVWAGLPGQESGNALVDVIYGDTTPSGKLPYTIAKQAADYGASWINAETDDFPEGLYVDYRHFDAKGIAPRYEFGYGLSYTTFKYSGLWVNMDASAGAANGQVVPGGPADLFEVVGQVSVSVRNNGRVAGAEVAQLYLGLPDSAPATPPKQLRGFQKLMLQPGQTGRATFKLTRRDLSYWDVQQQKWVVPSGTFKVYVGSSSRDIREEGSFRVRRGW.

An N-terminal signal peptide occupies residues 1–17 (MQTLFLSLLAAAVTVHA). Residues asparagine 40 and asparagine 224 are each glycosylated (N-linked (GlcNAc...) asparagine). Residue aspartate 252 is part of the active site. Asparagine 398 carries N-linked (GlcNAc...) asparagine glycosylation.

This sequence belongs to the glycosyl hydrolase 3 family.

Its subcellular location is the secreted. The catalysed reaction is Hydrolysis of terminal, non-reducing beta-D-glucosyl residues with release of beta-D-glucose.. It functions in the pathway glycan metabolism; cellulose degradation. Beta-glucosidases are one of a number of cellulolytic enzymes involved in the degradation of cellulosic biomass. Catalyzes the last step releasing glucose from the inhibitory cellobiose. The protein is Probable beta-glucosidase L (bglL) of Aspergillus fumigatus (strain ATCC MYA-4609 / CBS 101355 / FGSC A1100 / Af293) (Neosartorya fumigata).